A 355-amino-acid polypeptide reads, in one-letter code: MGVKFLKILVCGLFFWSLNAHLWGKQDNSFLGVAEKAYKSGNYSKATSYFKKACNDGVSEGCTQLGIIYENGQGTRIDYKKALEYYKTACQADDREGCFGLGGLYDEGLGTTQNYQEAIDAYAKACVLKHPESCYNLGIIYDRKIKGNADQAVTYYQKSCNFDMAKGCYVLGVAYEKGFLEVKQSNHKAVIYYLKACRLDDGQACRALGSLFENGDAGLDEDFEVAFDYLQKACGLNNSGGCASLGSMYMLGRYVKKDPQKAFNFFKQACDMGSAVSCSRMGFMYSQGDAVPKDLRKALDNYERGCDMGDEVGCFALAGMYYNMKDKENAIMIYDKGCKLGMKQACENLTKLRGY.

A signal peptide spans 1–22 (MGVKFLKILVCGLFFWSLNAHL). 8 TPR repeats span residues 27–60 (DNSFLGVAEKAYKSGNYSKATSYFKKACNDGVSE), 63–96 (TQLGIIYENGQGTRIDYKKALEYYKTACQADDRE), 98–131 (CFGLGGLYDEGLGTTQNYQEAIDAYAKACVLKHP), 132–166 (ESCYNLGIIYDRKIKGNADQAVTYYQKSCNFDMAK), 202–240 (GQACRALGSLFENGDAGLDEDFEVAFDYLQKACGLNNSG), 245–275 (LGSMYMLGRYVKKDPQKAFNFFKQACDMGSA), 276–311 (VSCSRMGFMYSQGDAVPKDLRKALDNYERGCDMGDE), and 312–344 (VGCFALAGMYYNMKDKENAIMIYDKGCKLGMKQ). 9 cysteine pairs are disulfide-bonded: Cys54-Cys62, Cys90-Cys98, Cys126-Cys134, Cys160-Cys168, Cys197-Cys205, Cys234-Cys242, Cys270-Cys278, Cys306-Cys314, and Cys338-Cys346.

This sequence belongs to the hcp beta-lactamase family.

The protein localises to the secreted. It catalyses the reaction a beta-lactam + H2O = a substituted beta-amino acid. May hydrolyze 6-aminopenicillinic acid and 7-aminocephalosporanic acid (ACA) derivatives. The protein is Putative beta-lactamase HcpE (hcpE) of Helicobacter pylori (strain ATCC 700392 / 26695) (Campylobacter pylori).